A 230-amino-acid polypeptide reads, in one-letter code: 7-cyano-7-deazaguanine synthase (230 aa).

An ATP-binding site is contributed by 16–26 (LSGGLDSATVV). Residues Cys195, Cys205, Cys208, and Cys211 each contribute to the Zn(2+) site.

It belongs to the QueC family. Zn(2+) is required as a cofactor.

The enzyme catalyses 7-carboxy-7-deazaguanine + NH4(+) + ATP = 7-cyano-7-deazaguanine + ADP + phosphate + H2O + H(+). It participates in purine metabolism; 7-cyano-7-deazaguanine biosynthesis. Catalyzes the ATP-dependent conversion of 7-carboxy-7-deazaguanine (CDG) to 7-cyano-7-deazaguanine (preQ(0)). The protein is 7-cyano-7-deazaguanine synthase of Pseudomonas fluorescens (strain Pf0-1).